A 276-amino-acid polypeptide reads, in one-letter code: MNGRTQLASWARIAMDRGDHHHLQQQHQFLMPPPAPVVPPQLCMPAMMADEQYMDLGGGGAAAAPGRGGAGERKRRFTEEQIRSLESMFHAHHAKLEPREKAELARELGLQPRQVAIWFQNKRARWRSKQLEHDYAALRSKYDALHSRVESLKQEKLALTVQLHELRERLREREERSGNGGAATTAASSSSCNGSGSEEVDDDDDKRNAAAGCLDLEPPESCVLGGATCATPADVSVESDQCDDQLDYDEGLFPESFCATPELWEPWPLVEWNAVA.

A DNA-binding region (homeobox) is located at residues 70-130; that stretch reads AGERKRRFTE…NKRARWRSKQ (61 aa). Residues 129 to 173 are leucine-zipper; sequence KQLEHDYAALRSKYDALHSRVESLKQEKLALTVQLHELRERLRER. A disordered region spans residues 170–212; the sequence is LREREERSGNGGAATTAASSSSCNGSGSEEVDDDDDKRNAAAG. The segment covering 182–197 has biased composition (low complexity); it reads AATTAASSSSCNGSGS.

It belongs to the HD-ZIP homeobox family. Class I subfamily. In terms of tissue distribution, expressed in seedlings, roots, stems, leaf sheaths and blades and panicles.

It localises to the nucleus. In terms of biological role, probable transcription factor. The sequence is that of Homeobox-leucine zipper protein HOX22 (HOX22) from Oryza sativa subsp. japonica (Rice).